The primary structure comprises 160 residues: Nucleotide-binding protein VV1_2655 (160 aa).

This sequence belongs to the YajQ family.

Functionally, nucleotide-binding protein. This chain is Nucleotide-binding protein VV1_2655, found in Vibrio vulnificus (strain CMCP6).